The primary structure comprises 153 residues: MIIKILLLIISISLFLNISIGIDENQIWKSCGTPQDIFHINSIVVKPTPPVKGKLVKVNVNGTFIKDVVAGEAKIIAKYNNIMTLYNETNDLCSPTAQAIIGNCPFKKGPTYLHSANFTIPASAPNGYYSGNILLTDNFNNTITCINVAFNLQ.

The signal sequence occupies residues M1–G21. 5 N-linked (GlcNAc...) asparagine glycosylation sites follow: N17, N61, N87, N117, and N140.

This sequence belongs to the NPC2 family. As to quaternary structure, monomer.

Its function is as follows. Catalyzes the intermembrane transfer of phosphatidylglycerol and phosphatidylinositol. In Dictyostelium discoideum (Social amoeba), this protein is Putative phosphatidylglycerol/phosphatidylinositol transfer protein DDB_G0285639.